Here is a 134-residue protein sequence, read N- to C-terminus: Transcription antitermination protein NusB (134 aa).

Belongs to the NusB family.

In terms of biological role, involved in transcription antitermination. Required for transcription of ribosomal RNA (rRNA) genes. Binds specifically to the boxA antiterminator sequence of the ribosomal RNA (rrn) operons. This Syntrophomonas wolfei subsp. wolfei (strain DSM 2245B / Goettingen) protein is Transcription antitermination protein NusB.